We begin with the raw amino-acid sequence, 227 residues long: Nodulation protein W (227 aa).

Residues 21 to 135 (IVFVVEDDIS…ELLDAVVAAT (115 aa)) form the Response regulatory domain. At aspartate 70 the chain carries 4-aspartylphosphate. One can recognise an HTH luxR-type domain in the interval 151–216 (LKSLFETLSP…DLIRMSETLG (66 aa)). The segment at residues 175–194 (NKQVAAELGLAEITVKIYRG) is a DNA-binding region (H-T-H motif).

Phosphorylated by NodV.

The protein resides in the cytoplasm. In terms of biological role, member of the two-component regulatory system NodV/NodW probably involved in the regulation of the transcription of genes involved in the nodulation process. In Bradyrhizobium diazoefficiens (strain JCM 10833 / BCRC 13528 / IAM 13628 / NBRC 14792 / USDA 110), this protein is Nodulation protein W (nodW).